The following is a 349-amino-acid chain: Fe(3+) ions import ATP-binding protein FbpC (349 aa).

The 233-residue stretch at 4 to 236 (LELHHIGKSY…PVDEPTATFL (233 aa)) folds into the ABC transporter domain. ATP is bound at residue 36 to 43 (GPSGSGKT).

The protein belongs to the ABC transporter superfamily. Fe(3+) ion importer (TC 3.A.1.10) family. In terms of assembly, the complex is composed of two ATP-binding proteins (FbpC), two transmembrane proteins (FbpB) and a solute-binding protein (FbpA).

It localises to the cell inner membrane. It catalyses the reaction Fe(3+)(out) + ATP + H2O = Fe(3+)(in) + ADP + phosphate + H(+). Part of the ABC transporter complex FbpABC involved in Fe(3+) ions import. Responsible for energy coupling to the transport system. The protein is Fe(3+) ions import ATP-binding protein FbpC of Yersinia pseudotuberculosis serotype I (strain IP32953).